A 464-amino-acid chain; its full sequence is ERO1-like protein alpha (464 aa).

The first 23 residues, 1–23 (MGRAWGLLVGLLGVVWLLRLGHG), serve as a signal peptide directing secretion. 8 cysteine pairs are disulfide-bonded: Cys-35–Cys-48, Cys-37–Cys-46, Cys-85–Cys-387, Cys-94–Cys-99, Cys-94–Cys-130, Cys-99–Cys-104, Cys-207–Cys-237, and Cys-390–Cys-393. Phosphoserine occurs at positions 106, 142, and 144. 3 residues coordinate FAD: Arg-186, Thr-188, and Trp-199. 2 residues coordinate FAD: Ser-248 and His-251. Asn-276 carries an N-linked (GlcNAc...) asparagine glycan. Arg-283 and Arg-296 together coordinate FAD. Asn-380 is a glycosylation site (N-linked (GlcNAc...) asparagine).

This sequence belongs to the EROs family. In terms of assembly, predominantly monomer. May function both as a monomer and a homodimer. Interacts with PDILT. Interacts with ERP44; the interaction results in retention of ERO1A in the endoplasmic reticulum. FAD is required as a cofactor. N-glycosylated. In terms of processing, the Cys-94/Cys-99 and Cys-390/Cys-393 disulfide bonds constitute the redox-active center. The Cys-94/Cys-99 disulfide bond may accept electron from P4HB and funnel them to the active site disulfide Cys-390/Cys-393. The regulatory Cys-99/Cys-104 disulfide bond stabilizes the other regulatory bond Cys-94/Cys-130. Post-translationally, phosphorylated on Ser-144 by FAM20C in the Golgi which increases its enzymatic activity. Phosphorylation is induced by lactation. It is also induced by hypoxia and reductive stress. Widely expressed (at protein level). In the mammary gland, expressed at higher levels in lactating mice than in virgin mice (at protein level).

Its subcellular location is the endoplasmic reticulum membrane. The protein resides in the golgi apparatus lumen. It is found in the secreted. The protein localises to the cell projection. It localises to the dendrite. Enzyme activity is tightly regulated to prevent the accumulation of reactive oxygen species in the endoplasmic reticulum. Reversibly down-regulated by the formation of disulfide bonds between the active site Cys-94 and Cys-130, and between Cys-99 and Cys-104. Glutathione may be required to regulate its activity in the endoplasmic reticulum. Its function is as follows. Oxidoreductase involved in disulfide bond formation in the endoplasmic reticulum. Efficiently reoxidizes P4HB/PDI, the enzyme catalyzing protein disulfide formation, in order to allow P4HB to sustain additional rounds of disulfide formation. Following P4HB reoxidation, passes its electrons to molecular oxygen via FAD, leading to the production of reactive oxygen species (ROS) in the cell. Required for the proper folding of immunoglobulins. Plays an important role in ER stress-induced, CHOP-dependent apoptosis by activating the inositol 1,4,5-trisphosphate receptor IP3R1. This is ERO1-like protein alpha from Mus musculus (Mouse).